Consider the following 505-residue polypeptide: Metalloprotease TIKI1 (505 aa).

The signal sequence occupies residues 1–19 (MSPWSWFLLQTLCLLPTGA). Residues 20–477 (ASRRGAPGTA…RRGHSHHSQM (458 aa)) are Extracellular-facing. N-linked (GlcNAc...) asparagine glycosylation is found at N220, N229, N278, and N336. Positions 389-428 (PEAVSSGHSTLPPLVSRPGSADTPSEAEQRFRKKRRRSQR) are disordered. Positions 419 to 428 (FRKKRRRSQR) are enriched in basic residues. The chain crosses the membrane as a helical span at residues 478 to 498 (VASSACLSLWTPVFWVLVLAF). Residues 499-505 (QTETPLL) lie on the Cytoplasmic side of the membrane.

It belongs to the TIKI family. Mn(2+) is required as a cofactor. Requires Co(2+) as cofactor.

Its subcellular location is the cell membrane. Functionally, metalloprotease that acts as a negative regulator of the Wnt signaling pathway by mediating the cleavage of the 8 N-terminal residues of a subset of Wnt proteins. Following cleavage, Wnt proteins become oxidized and form large disulfide-bond oligomers, leading to their inactivation. Able to cleave WNT3A, WNT5, but not WNT11. Required for head formation. In Homo sapiens (Human), this protein is Metalloprotease TIKI1 (TRABD2A).